A 419-amino-acid chain; its full sequence is uncharacterized protein (419 aa).

The next 13 membrane-spanning stretches (helical) occupy residues 5 to 25, 26 to 46, 53 to 73, 102 to 122, 144 to 164, 170 to 190, 210 to 230, 234 to 254, 274 to 294, 309 to 329, 332 to 352, 360 to 380, and 396 to 416; these read MIIVFCALMMLAVPVGYALII, AAGVAVLFNGYLPLSIVAQQI, FPMLALPFFMLAGTLMLGGEL, VFGGVSGSAVANASALGSVLI, VIDVLIPPSIPMILFSLVSGV, FVAGILPGILMAASFVFVCWF, ATLALKSLPAVLLPVLIILFL, LATPTEVAVLSVVYSLALSLL, ATGVVMLVIMGSAAVGWVLTF, ISSPIVIILMMNILMLIVGMP, MPPAILLLGPIFVPLADTIGL, MMVINLGIGLYTPPIGTTLFI, and LWPFFAMAMTLLLAVSFIPAL.

It belongs to the YiaN/YgiK family.

The protein resides in the cell inner membrane. This is an uncharacterized protein from Sinorhizobium fredii (strain NBRC 101917 / NGR234).